The sequence spans 574 residues: Proline--tRNA ligase (574 aa).

Belongs to the class-II aminoacyl-tRNA synthetase family. ProS type 1 subfamily. In terms of assembly, homodimer.

The protein localises to the cytoplasm. The catalysed reaction is tRNA(Pro) + L-proline + ATP = L-prolyl-tRNA(Pro) + AMP + diphosphate. Catalyzes the attachment of proline to tRNA(Pro) in a two-step reaction: proline is first activated by ATP to form Pro-AMP and then transferred to the acceptor end of tRNA(Pro). As ProRS can inadvertently accommodate and process non-cognate amino acids such as alanine and cysteine, to avoid such errors it has two additional distinct editing activities against alanine. One activity is designated as 'pretransfer' editing and involves the tRNA(Pro)-independent hydrolysis of activated Ala-AMP. The other activity is designated 'posttransfer' editing and involves deacylation of mischarged Ala-tRNA(Pro). The misacylated Cys-tRNA(Pro) is not edited by ProRS. In Marinomonas sp. (strain MWYL1), this protein is Proline--tRNA ligase.